The chain runs to 346 residues: Glucose-6-phosphatase 3 (346 aa).

Over 1–24 (MESTLGAGIVIAEALQNQLAWLEN) the chain is Lumenal. The chain crosses the membrane as a helical span at residues 25–45 (VWLWITFLGDPKILFLFYFPA). Topologically, residues 46 to 54 (AYYASRRVG) are cytoplasmic. Residues 55-75 (IAVLWISLITEWLNLIFKWFL) form a helical membrane-spanning segment. Over 76-114 (FGDRPFWWVHESGYYSQAPAQVHQFPSSCETGPGSPSGH) the chain is Lumenal. Arg-79 lines the substrate pocket. The active-site Proton donor is the His-114. The chain crosses the membrane as a helical span at residues 115–135 (CMITGAALWPIMTALSSQVAT). The Cytoplasmic portion of the chain corresponds to 136–146 (RARSRWVRVMP). A helical membrane pass occupies residues 147 to 164 (SLAYCTFLLAVGLSRIFI). Arg-161 serves as a coordination point for substrate. Residues 165–169 (LAHFP) are Lumenal-facing. His-167 (nucleophile) is an active-site residue. A helical membrane pass occupies residues 170-186 (HQVLAGLITGAVLGWLM). The Cytoplasmic segment spans residues 187 to 197 (TPRVPMERELS). The chain crosses the membrane as a helical span at residues 198–218 (FYGLTALALMLGTSLIYWTLF). At 219–254 (TLGLDLSWSISLAFKWCERPEWIHVDSRPFASLSRD) the chain is on the lumenal side. A helical transmembrane segment spans residues 255–273 (SGAALGLGIALHSPCYAQV). Over 274–283 (RRAQLGNGQK) the chain is Cytoplasmic. Residues 284–304 (IACLVLAMGLLGPLDWLGHPP) traverse the membrane as a helical segment. Residues 305–307 (QIS) are Lumenal-facing. The helical transmembrane segment at 308-328 (LFYIFNFLKYTLWPCLVLALV) threads the bilayer. At 329–346 (PWAVHMFSAQEAPPIHSS) the chain is on the cytoplasmic side.

This sequence belongs to the glucose-6-phosphatase family. Ubiquitously expressed. Highly expressed in skeletal muscle, at intermediate levels in heart, brain, placenta, kidney, colon, thymus, spleen and pancreas. Also detected in testis, prostate, ovary, liver, lung, small intestine and peripheral blood lymphocytes.

The protein localises to the endoplasmic reticulum membrane. It catalyses the reaction D-glucose 6-phosphate + H2O = D-glucose + phosphate. The protein operates within carbohydrate biosynthesis; gluconeogenesis. With respect to regulation, inhibited by vanadate. In terms of biological role, hydrolyzes glucose-6-phosphate to glucose in the endoplasmic reticulum. May form with the glucose-6-phosphate transporter (SLC37A4/G6PT) a ubiquitously expressed complex responsible for glucose production through glycogenolysis and gluconeogenesis. Probably required for normal neutrophil function. In Homo sapiens (Human), this protein is Glucose-6-phosphatase 3 (G6PC3).